A 292-amino-acid chain; its full sequence is MSERVEAGQNVIKEYLVLTKPGIVSLVLITTLGGMYLGSRGELQPELVFWTLLGTGLAAAGSAVLNMVIDKDIDKLMVRTSERPLPKGTVDPTKAFIFGITLQVFSLVIMLTFVGVLPALLVALASFSYVILYSLLLKRKSPVATEIGGISGALPPVIGYVAASGSVDINAIALFLLMFMWQPPHFWVLALKYADDYKRAGIPTLPVARGVFITKLKTLLYTASLFPVSLIPYLTGLVENLYFVVAVVMNLIYLGLTLKFFFSKKEESMKLFFFSIIYLAVLFGTMIVDMVK.

Transmembrane regions (helical) follow at residues 15 to 35, 49 to 69, 104 to 124, 147 to 167, 171 to 191, 218 to 238, 242 to 262, and 271 to 291; these read YLVL…LGGM, FWTL…NMVI, VFSL…LVAL, IGGI…SGSV, AIAL…VLAL, TLLY…TGLV, YFVV…KFFF, and LFFF…VDMV.

It belongs to the UbiA prenyltransferase family. Protoheme IX farnesyltransferase subfamily.

The protein localises to the cell inner membrane. It carries out the reaction heme b + (2E,6E)-farnesyl diphosphate + H2O = Fe(II)-heme o + diphosphate. It participates in porphyrin-containing compound metabolism; heme O biosynthesis; heme O from protoheme: step 1/1. Functionally, converts heme B (protoheme IX) to heme O by substitution of the vinyl group on carbon 2 of heme B porphyrin ring with a hydroxyethyl farnesyl side group. The polypeptide is Protoheme IX farnesyltransferase (Aquifex aeolicus (strain VF5)).